An 89-amino-acid polypeptide reads, in one-letter code: Small ribosomal subunit protein uS15 (89 aa).

It belongs to the universal ribosomal protein uS15 family. As to quaternary structure, part of the 30S ribosomal subunit. Forms a bridge to the 50S subunit in the 70S ribosome, contacting the 23S rRNA.

In terms of biological role, one of the primary rRNA binding proteins, it binds directly to 16S rRNA where it helps nucleate assembly of the platform of the 30S subunit by binding and bridging several RNA helices of the 16S rRNA. Its function is as follows. Forms an intersubunit bridge (bridge B4) with the 23S rRNA of the 50S subunit in the ribosome. This is Small ribosomal subunit protein uS15 from Ligilactobacillus salivarius (strain UCC118) (Lactobacillus salivarius).